The sequence spans 236 residues: Mammalian ependymin-related protein 1 (236 aa).

A signal peptide spans 1-35 (MPRRAPLRVARGSLDAWLLGGLWVCALGCLCGVGM). 3 disulfide bridges follow: cysteine 54-cysteine 184, cysteine 100-cysteine 234, and cysteine 125-cysteine 222. N-linked (GlcNAc...) asparagine glycosylation is found at asparagine 142 and asparagine 194.

The protein belongs to the ependymin family. Homodimer. Post-translationally, N-glycosylated; the glycan contains mannose-6-phosphate moieties.

It is found in the lysosome lumen. It localises to the secreted. Binds anionic lipids and gangliosides at acidic pH. The chain is Mammalian ependymin-related protein 1 (EPDR1) from Bos taurus (Bovine).